The primary structure comprises 533 residues: Protein trichome birefringence-like 18 (533 aa).

Residues 21 to 41 traverse the membrane as a helical; Signal-anchor for type II membrane protein segment; that stretch reads VSTVAIAIGGLASFFVFGLLL. The segment at 93–171 is disordered; that stretch reads SDSSSGLPVV…PDDVSETASA (79 aa). Residues 113–154 show a composition bias toward basic and acidic residues; the sequence is SSDRKLETPLTQEKEDLVSSDITEKTDVQSGERETNVSKAED. A GDS motif motif is present at residues 248–250; it reads GDS. The interval 475-502 is disordered; that stretch reads HDGHPGPFRSPDPNKITKRGPDGRPPPQ. Residues 503 to 517 carry the DCXHWCLPGXXDXWN motif motif; that stretch reads DCLHWCMPGPVDTWN.

It belongs to the PC-esterase family. TBL subfamily.

The protein localises to the membrane. Functionally, may act as a bridging protein that binds pectin and other cell wall polysaccharides. Probably involved in maintaining esterification of pectins. May be involved in the specific O-acetylation of cell wall polymers. This chain is Protein trichome birefringence-like 18 (TBL18), found in Arabidopsis thaliana (Mouse-ear cress).